An 80-amino-acid chain; its full sequence is UPF0248 protein YG5714_2801 (80 aa).

Belongs to the UPF0248 family.

The polypeptide is UPF0248 protein YG5714_2801 (Saccharolobus islandicus (strain Y.G.57.14 / Yellowstone #1) (Sulfolobus islandicus)).